Here is a 268-residue protein sequence, read N- to C-terminus: MERYESLFAQLKERKEGAFVPFVTLGDPGIEQSLKIIDTLIEAGADALELGIPFSDPLADGPTIQNATLRAFAAGVTPAQCFEMLALIRQKHPTIPIGLLMYANLVFNKGIDEFYAQCEKVGVDSVLVADVPVEESAPFRQAALRHNVAPIFICPPNADDDLLRQIASYGRGYTYLLSRAGVTGAENRAALPLNHLVAKLKEYNAAPPLQGFGISAPDQVKAAIDAGAAGAISGSAIVKIIEQHINEPEKMLAALKVFVQPMKAATRS.

Catalysis depends on proton acceptor residues glutamate 49 and aspartate 60.

Belongs to the TrpA family. Tetramer of two alpha and two beta chains.

It catalyses the reaction (1S,2R)-1-C-(indol-3-yl)glycerol 3-phosphate + L-serine = D-glyceraldehyde 3-phosphate + L-tryptophan + H2O. The protein operates within amino-acid biosynthesis; L-tryptophan biosynthesis; L-tryptophan from chorismate: step 5/5. Its function is as follows. The alpha subunit is responsible for the aldol cleavage of indoleglycerol phosphate to indole and glyceraldehyde 3-phosphate. This is Tryptophan synthase alpha chain from Escherichia coli (strain ATCC 8739 / DSM 1576 / NBRC 3972 / NCIMB 8545 / WDCM 00012 / Crooks).